We begin with the raw amino-acid sequence, 673 residues long: MAAATSPPRAERKRWGGGRLPGARRGSAGLAKKCPFSLELAEGGPTGGALYAPIGPPGVPGPSSPAAPAASPAAADLGPRPRVSLDPRVSIYSARRPLLARTHIQGRVYNFLERPTGWKCFVYHFAVFLIVLVCLIFSVLSTIEQYVALATGTLFWMEIVLVVFFGTEYAVRLWSAGCRSKYVGIWGRLRFARKPISIIDLIVVVASMVVLCVGSKGQVFATSAIRGIRFLQILRMLHVDRQGGTWRLLGSVVFIHRQELITTLYIGFLGLIFSSYFVYLAEKDAVNESGQVEFGSYADALWWGVVTVTTIGYGDKVPQTWVGKTIASCFSVFAISFFALPAGILGSGFALKVQQKQRQKHFNRQIPAAASLIQTAWRCYAAENPDSSTWKIYVRKPSRSQALLSPSPKPKKSVMVKKKKFKLDKDNGLSPGEKMLAVPQITCDLASEEQRPDHFSVDGCDNSVKKSPTLLEVSTAQFTRTNSFAEDLDLEGETLLTPITHVSQLREHHRATIKVIRRMQYFVAKKKFQQARKPYDVRDVIEQYSQGHLNLMVRIKELQRRLDQSIGRPALFISSSEKVKDRGSNTIGARLNRVEDKVTQLDQRLELITDMLQQLLSLHRGGTPGSRAPGGGGAQVAQPCSGGSINPELFLPSNALPTYEQLTVPGRGPEEGS.

Disordered stretches follow at residues 1 to 28 and 61 to 80; these read MAAA…RGSA and GPSS…LGPR. The Cytoplasmic segment spans residues 1-118; sequence MAAATSPPRA…YNFLERPTGW (118 aa). Ser-27 carries the post-translational modification Phosphoserine. Low complexity predominate over residues 66-75; that stretch reads AAPAASPAAA. Residues 119 to 140 traverse the membrane as a helical segment; it reads KCFVYHFAVFLIVLVCLIFSVL. At 141–151 the chain is on the extracellular side; the sequence is STIEQYVALAT. The helical transmembrane segment at 152-174 threads the bilayer; the sequence is GTLFWMEIVLVVFFGTEYAVRLW. At 175–190 the chain is on the cytoplasmic side; sequence SAGCRSKYVGIWGRLR. The helical transmembrane segment at 191 to 216 threads the bilayer; sequence FARKPISIIDLIVVVASMVVLCVGSK. Residues 217-224 are Extracellular-facing; sequence GQVFATSA. The chain crosses the membrane as a helical; Voltage-sensor span at residues 225-240; the sequence is IRGIRFLQILRMLHVD. Positions 236–244 are interaction with KCNE3; it reads MLHVDRQGG. At 241–258 the chain is on the cytoplasmic side; sequence RQGGTWRLLGSVVFIHRQ. Gln-242 is an a 1,2-diacyl-sn-glycero-3-phospho-(1D-myo-inositol-4,5-bisphosphate) binding site. The chain crosses the membrane as a helical span at residues 259–281; it reads ELITTLYIGFLGLIFSSYFVYLA. The Extracellular segment spans residues 282-297; sequence EKDAVNESGQVEFGSY. An N-linked (GlcNAc...) asparagine glycan is attached at Asn-287. The pore-forming intramembrane region spans 298 to 318; that stretch reads ADALWWGVVTVTTIGYGDKVP. Residues 319 to 320 lie on the Extracellular side of the membrane; it reads QT. The chain crosses the membrane as a helical span at residues 321–346; sequence WVGKTIASCFSVFAISFFALPAGILG. The Cytoplasmic segment spans residues 347–673; sequence SGFALKVQQK…VPGRGPEEGS (327 aa). The interaction with CALM stretch occupies residues 368-380; sequence AAASLIQTAWRCY. Phosphoserine is present on residues Ser-405 and Ser-407. The tract at residues 514-528 is interaction with CALM; calcium-dependent; that stretch reads KVIRRMQYFVAKKKF. The tract at residues 534–571 is interaction with KCNE1 C-terminus; that stretch reads PYDVRDVIEQYSQGHLNLMVRIKELQRRLDQSIGRPAL. An interaction with AKAP9 region spans residues 587–615; the sequence is IGARLNRVEDKVTQLDQRLELITDMLQQL. The C-terminal assembly domain (tetramerization) stretch occupies residues 588-619; the sequence is GARLNRVEDKVTQLDQRLELITDMLQQLLSLH. Residues 619–673 form a disordered region; that stretch reads HRGGTPGSRAPGGGGAQVAQPCSGGSINPELFLPSNALPTYEQLTVPGRGPEEGS. Residues 622–634 are compositionally biased toward gly residues; that stretch reads GTPGSRAPGGGGA.

This sequence belongs to the potassium channel family. KQT (TC 1.A.1.15) subfamily. Kv7.1/KCNQ1 sub-subfamily. Tetramer. Heterotetramer with KCNE1; targets to the membrane raft. Interacts (via C-terminus) with CALM; forms a heterooctameric structure (with 4:4 KCNQ1:CALM stoichiometry) in a calcium-independent manner. Interacts with AKAP9; targets protein kinase A (PKA) catalytic and regulatory subunits and protein phosphatase 1 (PP1) to the KCNQ1-KCNE1 complex, allowing PKA-mediated phosphorylation and increase of delayed rectifier potassium channel activity. Interacts with KCNE2; form a heterooligomer complex that targets to the membrane raft and leading to currents with an apparently instantaneous activation, a rapid deactivation process and a linear current-voltage relationship and decreases the amplitude of the outward current. Interacts with AP2M1; mediates estrogen-induced internalization via clathrin-coated vesicles. Interacts with NEDD4L; promotes internalization and decreases I(Ks) currents. Interacts with USP2; counteracts the NEDD4L-specific down-regulation of I(Ks) and restore plasma membrane localization. Heterotetramer with KCNQ5; has a voltage-gated potassium channel activity. Interacts with KCNE3; four KCNE3 molecules are bound to one KCNQ1 tetramer (4:4 KCNQ1:KCNE3 stoichiometry); alters membrane raft localization; affects KCNQ1 structure and gating properties. Interacts with KCNE4; impairs KCNQ1 localization in lipid rafts and inhibits voltage-gated potassium channel activity. Interacts with KCNE5; impairs KCNQ1 localization in lipid rafts and only conducts current upon strong and continued depolarization. Interacts with SLC5A3; forms coregulatory channel-transporter complexes that modulate Na(+)-coupled myo-inositol influx through the transporter. In terms of processing, ubiquitinated by NEDD4L; promotes internalization. The ubiquitinylated form is internalized through a clathrin-mediated endocytosis by interacting with AP2M1 and is recycled back to the cell membrane via RAB4A and RAB11A. Post-translationally, deubiquitinated by USP2; counteracts the NEDD4L-specific down-regulation of I(Ks) and restores the membrane localization.

It localises to the cell membrane. The protein localises to the cytoplasmic vesicle membrane. It is found in the early endosome. Its subcellular location is the membrane raft. The protein resides in the endoplasmic reticulum. It localises to the basolateral cell membrane. The protein localises to the apical cell membrane. The enzyme catalyses K(+)(in) = K(+)(out). PIP2 molecule is essential to activate KCNQ channels by inducing the coupling of the voltage-sensing domain (VSD) and the pore-forming domain (PD). Upon channel activation, PIP2 disrupts the VSD-calmodulin/CALM interactions, causing the release of CALM from the VSD which triggers the opening of the gate. Calcium potentiates KCNQ1 channel current through calcium-bound CALM. Calcium-bound CALM competes with PIP2 to stabilize the channel open state. In terms of biological role, pore-forming subunit of the voltage-gated potassium (Kv) channel involved in the regulation of cardiomyocyte excitability and important in normal development and functions of myocardium, inner ear, stomach and colon. Associates with KCNE beta subunits that modulates current kinetics. Induces a voltage-dependent by rapidly activating and slowly deactivating potassium-selective outward current. Also promotes a delayed voltage activated potassium current showing outward rectification characteristic. During beta-adrenergic receptor stimulation participates in cardiac repolarization by associating with KCNE1 to form the I(Ks) cardiac potassium current that increases the amplitude and slows down the activation kinetics of outward potassium current I(Ks). Muscarinic agonist oxotremorine-M strongly suppresses KCNQ1/KCNE1 current. When associated with KCNE3, forms the potassium channel that is important for cyclic AMP-stimulated intestinal secretion of chloride ions. This interaction with KCNE3 is reduced by 17beta-estradiol, resulting in the reduction of currents. During conditions of increased substrate load, maintains the driving force for proximal tubular and intestinal sodium ions absorption, gastric acid secretion, and cAMP-induced jejunal chloride ions secretion. Allows the provision of potassium ions to the luminal membrane of the secretory canaliculus in the resting state as well as during stimulated acid secretion. When associated with KCNE2, forms a heterooligomer complex leading to currents with an apparently instantaneous activation, a rapid deactivation process and a linear current-voltage relationship and decreases the amplitude of the outward current. When associated with KCNE4, inhibits voltage-gated potassium channel activity. When associated with KCNE5, this complex only conducts current upon strong and continued depolarization. Also forms a heterotetramer with KCNQ5 that has a voltage-gated potassium channel activity. Binds with phosphatidylinositol 4,5-bisphosphate. KCNQ1-KCNE2 channel associates with Na(+)-coupled myo-inositol symporter in the apical membrane of choroid plexus epithelium and regulates the myo-inositol gradient between blood and cerebrospinal fluid with an impact on neuron excitability. This chain is Potassium voltage-gated channel subfamily KQT member 1, found in Sus scrofa (Pig).